Reading from the N-terminus, the 44-residue chain is Photosystem I reaction center subunit IX (44 aa).

A helical transmembrane segment spans residues 7 to 27 (YLSTAPVLAISWLIFVAGLLI).

The protein belongs to the PsaJ family.

The protein localises to the plastid. It localises to the chloroplast thylakoid membrane. Functionally, may help in the organization of the PsaE and PsaF subunits. In Larix decidua (European larch), this protein is Photosystem I reaction center subunit IX.